The chain runs to 236 residues: Mediator of RNA polymerase II transcription subunit 20 (236 aa).

It belongs to the Mediator complex subunit 20 family. In terms of assembly, component of the Mediator complex.

The protein resides in the nucleus. In terms of biological role, component of the Mediator complex, a coactivator involved in the regulated transcription of nearly all RNA polymerase II-dependent genes. Mediator functions as a bridge to convey information from gene-specific regulatory proteins to the basal RNA polymerase II transcription machinery. Mediator is recruited to promoters by direct interactions with regulatory proteins and serves as a scaffold for the assembly of a functional preinitiation complex with RNA polymerase II and the general transcription factors. The sequence is that of Mediator of RNA polymerase II transcription subunit 20 (SRB2) from Debaryomyces hansenii (strain ATCC 36239 / CBS 767 / BCRC 21394 / JCM 1990 / NBRC 0083 / IGC 2968) (Yeast).